Here is a 219-residue protein sequence, read N- to C-terminus: Carbonic anhydrase 1 (219 aa).

The Zn(2+) site is built by cysteine 39, aspartate 41, histidine 98, and cysteine 101.

Belongs to the beta-class carbonic anhydrase family. Oligomer. Zn(2+) is required as a cofactor.

The catalysed reaction is hydrogencarbonate + H(+) = CO2 + H2O. Functionally, reversible hydration of carbon dioxide. Carbon dioxide formed in the bicarbonate-dependent decomposition of cyanate by cyanase (CynS) diffuses out of the cell faster than it would be hydrated to bicarbonate, so the apparent function of this enzyme is to catalyze the hydration of carbon dioxide and thus prevent depletion of cellular bicarbonate. The chain is Carbonic anhydrase 1 (cynT) from Escherichia coli O157:H7.